Consider the following 104-residue polypeptide: Large ribosomal subunit protein uL23 (104 aa).

It belongs to the universal ribosomal protein uL23 family. In terms of assembly, part of the 50S ribosomal subunit. Contacts protein L29, and trigger factor when it is bound to the ribosome.

Its function is as follows. One of the early assembly proteins it binds 23S rRNA. One of the proteins that surrounds the polypeptide exit tunnel on the outside of the ribosome. Forms the main docking site for trigger factor binding to the ribosome. The chain is Large ribosomal subunit protein uL23 from Rhodospirillum rubrum (strain ATCC 11170 / ATH 1.1.1 / DSM 467 / LMG 4362 / NCIMB 8255 / S1).